A 138-amino-acid polypeptide reads, in one-letter code: NADPH-dependent 7-cyano-7-deazaguanine reductase (138 aa).

Cysteine 53 serves as the catalytic Thioimide intermediate. The Proton donor role is filled by aspartate 60. Residues 75-77 and 94-95 contribute to the substrate site; these read VEL and HE.

This sequence belongs to the GTP cyclohydrolase I family. QueF type 1 subfamily.

The protein resides in the cytoplasm. The enzyme catalyses 7-aminomethyl-7-carbaguanine + 2 NADP(+) = 7-cyano-7-deazaguanine + 2 NADPH + 3 H(+). Its pathway is tRNA modification; tRNA-queuosine biosynthesis. Its function is as follows. Catalyzes the NADPH-dependent reduction of 7-cyano-7-deazaguanine (preQ0) to 7-aminomethyl-7-deazaguanine (preQ1). The polypeptide is NADPH-dependent 7-cyano-7-deazaguanine reductase (Gloeothece citriformis (strain PCC 7424) (Cyanothece sp. (strain PCC 7424))).